The following is a 329-amino-acid chain: Transaldolase (329 aa).

The active-site Schiff-base intermediate with substrate is the Lys-136.

It belongs to the transaldolase family. Type 1 subfamily. In terms of assembly, homodimer.

It localises to the cytoplasm. It catalyses the reaction D-sedoheptulose 7-phosphate + D-glyceraldehyde 3-phosphate = D-erythrose 4-phosphate + beta-D-fructose 6-phosphate. The protein operates within carbohydrate degradation; pentose phosphate pathway; D-glyceraldehyde 3-phosphate and beta-D-fructose 6-phosphate from D-ribose 5-phosphate and D-xylulose 5-phosphate (non-oxidative stage): step 2/3. Transaldolase is important for the balance of metabolites in the pentose-phosphate pathway. In Methylococcus capsulatus (strain ATCC 33009 / NCIMB 11132 / Bath), this protein is Transaldolase.